Consider the following 277-residue polypeptide: NH(3)-dependent NAD(+) synthetase (277 aa).

36 to 43 contributes to the ATP binding site; sequence GLSGGIDS. Mg(2+) is bound at residue aspartate 42. Deamido-NAD(+) is bound at residue arginine 118. Threonine 138 serves as a coordination point for ATP. Residue glutamate 143 participates in Mg(2+) binding. Residues lysine 167 and serine 189 each contribute to the ATP site.

It belongs to the NAD synthetase family. As to quaternary structure, homodimer.

The enzyme catalyses deamido-NAD(+) + NH4(+) + ATP = AMP + diphosphate + NAD(+) + H(+). Its pathway is cofactor biosynthesis; NAD(+) biosynthesis; NAD(+) from deamido-NAD(+) (ammonia route): step 1/1. Its function is as follows. Catalyzes the ATP-dependent amidation of deamido-NAD to form NAD. Uses ammonia as a nitrogen source. The chain is NH(3)-dependent NAD(+) synthetase from Pelodictyon phaeoclathratiforme (strain DSM 5477 / BU-1).